Consider the following 115-residue polypeptide: Synaptobrevin homolog 2 (115 aa).

Low complexity predominate over residues 1 to 16 (MSSSVPYDPYVPPEES). The segment at 1 to 28 (MSSSVPYDPYVPPEESNSGANPNSQNKT) is disordered. At 1-93 (MSSSVPYDPY…MWWKDLKMRM (93 aa)) the chain is on the cytoplasmic side. Residues 17–28 (NSGANPNSQNKT) show a composition bias toward polar residues. The v-SNARE coiled-coil homology domain occupies 27-87 (KTAALRQEID…NRVRKQMWWK (61 aa)). Residue serine 58 is modified to Phosphoserine. Lysine 62 is covalently cross-linked (Glycyl lysine isopeptide (Lys-Gly) (interchain with G-Cter in ubiquitin)). Cysteine 94 carries the S-palmitoyl cysteine lipid modification. A helical; Anchor for type IV membrane protein membrane pass occupies residues 94–112 (CLFLVVIILLVVIIVPIVV). The Vesicular segment spans residues 113–115 (HFS).

This sequence belongs to the synaptobrevin family. In terms of processing, palmitoylated by SWF1.

It is found in the endomembrane system. SNC1 and SNC2 are vesicle-targeting proteins essential for normal secretory traffic between the Golgi and the plasma membrane. They may also be involved in vesicle fusion. The protein is Synaptobrevin homolog 2 (SNC2) of Saccharomyces cerevisiae (strain ATCC 204508 / S288c) (Baker's yeast).